Reading from the N-terminus, the 184-residue chain is Endothelial cell-specific molecule 1 (184 aa).

A signal peptide spans 1 to 21 (MKSLLLLTTLLIPLHLGMAWS). The IGFBP N-terminal domain occupies 24–102 (YAVDCPEHCD…GDEFGVCKDC (79 aa)). 6 disulfide bridges follow: cysteine 28–cysteine 51, cysteine 32–cysteine 53, cysteine 37–cysteine 54, cysteine 43–cysteine 57, cysteine 65–cysteine 83, and cysteine 77–cysteine 99. Residues 145–184 (RTSASQTERDAASGDGNAVREEIGDRNAARPSVMKWLNPR) form a disordered region. Over residues 151–172 (TERDAASGDGNAVREEIGDRNA) the composition is skewed to basic and acidic residues. Serine 157 is a glycosylation site (O-linked (Xyl...) (chondroitin sulfate) serine).

O-glycosylated; contains chondroitin sulfate and dermatan sulfate. As to expression, pineal gland specific.

The protein localises to the secreted. Involved in angiogenesis; promotes angiogenic sprouting. May have potent implications in lung endothelial cell-leukocyte interactions. This Rattus norvegicus (Rat) protein is Endothelial cell-specific molecule 1 (Esm1).